A 401-amino-acid chain; its full sequence is Phosphoglycerate kinase (401 aa).

Substrate-binding positions include 24–26 (DFN), Arg40, 63–66 (HFGR), Arg122, and Arg155. Residues Lys206, Gly297, Glu328, and 357-360 (GGDS) each bind ATP.

This sequence belongs to the phosphoglycerate kinase family. In terms of assembly, monomer.

Its subcellular location is the cytoplasm. It carries out the reaction (2R)-3-phosphoglycerate + ATP = (2R)-3-phospho-glyceroyl phosphate + ADP. It participates in carbohydrate degradation; glycolysis; pyruvate from D-glyceraldehyde 3-phosphate: step 2/5. The polypeptide is Phosphoglycerate kinase (Acaryochloris marina (strain MBIC 11017)).